The primary structure comprises 506 residues: Anaerobic nitric oxide reductase transcription regulator NorR (506 aa).

Asp-57 bears the 4-aspartylphosphate mark. In terms of domain architecture, Sigma-54 factor interaction spans 187–416 (MIGLSPAMTQ…LEHAIHRAVV (230 aa)). ATP is bound by residues 215–222 (GETGTGKE) and 278–287 (ADNGTLFLDE). Positions 481-500 (WAASARALETDVANLHRLAK) form a DNA-binding region, H-T-H motif.

It participates in nitrogen metabolism; nitric oxide reduction. Functionally, required for the expression of anaerobic nitric oxide (NO) reductase, acts as a transcriptional activator for at least the norVW operon. Activation also requires sigma-54. In Salmonella arizonae (strain ATCC BAA-731 / CDC346-86 / RSK2980), this protein is Anaerobic nitric oxide reductase transcription regulator NorR.